Here is a 189-residue protein sequence, read N- to C-terminus: UPF0301 protein RPR_01165 (189 aa).

The protein belongs to the UPF0301 (AlgH) family.

The sequence is that of UPF0301 protein RPR_01165 from Rickettsia peacockii (strain Rustic).